The sequence spans 883 residues: Phosphoenolpyruvate carboxylase (883 aa).

Catalysis depends on residues His138 and Lys546.

The protein belongs to the PEPCase type 1 family. The cofactor is Mg(2+).

It catalyses the reaction oxaloacetate + phosphate = phosphoenolpyruvate + hydrogencarbonate. Forms oxaloacetate, a four-carbon dicarboxylic acid source for the tricarboxylic acid cycle. In Salmonella arizonae (strain ATCC BAA-731 / CDC346-86 / RSK2980), this protein is Phosphoenolpyruvate carboxylase.